The chain runs to 171 residues: Endoribonuclease YbeY (171 aa).

Zn(2+) is bound by residues His-126, His-130, and His-136.

The protein belongs to the endoribonuclease YbeY family. Zn(2+) serves as cofactor.

The protein localises to the cytoplasm. In terms of biological role, single strand-specific metallo-endoribonuclease involved in late-stage 70S ribosome quality control and in maturation of the 3' terminus of the 16S rRNA. This chain is Endoribonuclease YbeY, found in Rhizobium etli (strain ATCC 51251 / DSM 11541 / JCM 21823 / NBRC 15573 / CFN 42).